Reading from the N-terminus, the 344-residue chain is MSTSITLFGAGSWGTALAVHLAAAGRDVTLWARRDEAVERMRTTHRNPTYLSDIEIPPSVHVTSDLEAAAGASSLWAVAVPSQNLRSVATRIAPLTRPGTTVVSLAKGIENETLQTMSQVLADELGGMEAQQIGVLYGPSHAEEVAENQPTTLVAAAPTEPRAEWVQDAFMTERLRVYVNTDVVGVEIGGSAKNVLAIAAGIGDGVGYGDNAKAALVTRGLAEIRRLGIAMGAKPRTFAGLAGIGDLLVTCMSPHSRNRYLGEQIGNGMTLEEIESEMDMVAEGVRTTQSVQDLARHHDIEMPVTEAVHRVLFENRRPEDMVDELMTRSAKREHWLPQGLRNVS.

NADPH contacts are provided by serine 12, tryptophan 13, arginine 33, arginine 34, and lysine 107. Lysine 107, glycine 138, and serine 140 together coordinate sn-glycerol 3-phosphate. Alanine 142 serves as a coordination point for NADPH. Positions 193, 246, 256, 257, and 258 each coordinate sn-glycerol 3-phosphate. Lysine 193 acts as the Proton acceptor in catalysis. Position 257 (arginine 257) interacts with NADPH. Residues valine 281 and glutamate 283 each contribute to the NADPH site.

This sequence belongs to the NAD-dependent glycerol-3-phosphate dehydrogenase family.

It is found in the cytoplasm. It catalyses the reaction sn-glycerol 3-phosphate + NAD(+) = dihydroxyacetone phosphate + NADH + H(+). The catalysed reaction is sn-glycerol 3-phosphate + NADP(+) = dihydroxyacetone phosphate + NADPH + H(+). It functions in the pathway membrane lipid metabolism; glycerophospholipid metabolism. In terms of biological role, catalyzes the reduction of the glycolytic intermediate dihydroxyacetone phosphate (DHAP) to sn-glycerol 3-phosphate (G3P), the key precursor for phospholipid synthesis. The polypeptide is Glycerol-3-phosphate dehydrogenase [NAD(P)+] 2 (Salinibacter ruber (strain DSM 13855 / M31)).